The following is a 513-amino-acid chain: ATP synthase subunit alpha (513 aa).

G169 to T176 lines the ATP pocket.

This sequence belongs to the ATPase alpha/beta chains family. As to quaternary structure, F-type ATPases have 2 components, CF(1) - the catalytic core - and CF(0) - the membrane proton channel. CF(1) has five subunits: alpha(3), beta(3), gamma(1), delta(1), epsilon(1). CF(0) has three main subunits: a(1), b(2) and c(9-12). The alpha and beta chains form an alternating ring which encloses part of the gamma chain. CF(1) is attached to CF(0) by a central stalk formed by the gamma and epsilon chains, while a peripheral stalk is formed by the delta and b chains.

The protein resides in the cell inner membrane. The catalysed reaction is ATP + H2O + 4 H(+)(in) = ADP + phosphate + 5 H(+)(out). In terms of biological role, produces ATP from ADP in the presence of a proton gradient across the membrane. The alpha chain is a regulatory subunit. The chain is ATP synthase subunit alpha from Histophilus somni (strain 2336) (Haemophilus somnus).